Reading from the N-terminus, the 391-residue chain is Homocysteine-responsive endoplasmic reticulum-resident ubiquitin-like domain member 1 protein (391 aa).

Met-1 carries the post-translational modification N-acetylmethionine. Residues 1–263 (MEPEPQPEPV…VEEDDEINRD (263 aa)) are Cytoplasmic-facing. The Ubiquitin-like domain maps to 10-72 (VTLLVKSPNQ…LLDHQCLQDL (63 aa)). Residues 90 to 126 (NPSKMPETSTKGAESTEQPDNSNQTQHPGDSSSDGLR) are disordered. Over residues 95–124 (PETSTKGAESTEQPDNSNQTQHPGDSSSDG) the composition is skewed to polar residues. The interval 115–200 (QHPGDSSSDG…ASGTFVPTPS (86 aa)) is interaction with UBQLN1. A Phosphoserine modification is found at Ser-135. Residues 264–284 (WLDWTYSAATFSVFLSILYFY) form a helical membrane-spanning segment. Residues 285–289 (SSLSR) are Lumenal-facing. Residues 290–310 (FLMVMGATVVMYLHHVGWFPF) form a helical membrane-spanning segment. Over 311–391 (RQRPVQNFPD…LPEGPPALAN (81 aa)) the chain is Cytoplasmic. The segment at 317-361 (NFPDDGGPRDAANQDPNNNLQGGMDPEMEDPNRLPPDREVLDPEH) is disordered. The span at 346–361 (DPNRLPPDREVLDPEH) shows a compositional bias: basic and acidic residues.

In terms of assembly, interacts with PSEN1 and PSEN2. Interacts with UBXN6. Interacts with UBQLN1, UBQLN2 and UBQLN4. Component of the HRD1 complex, which comprises at least SYNV1/HRD1, FAM8A1, HERPUD1/HERP, OS9, SEL1L and UBE2J1. FAM8A1 binding to SYNV1 may promote recruitment of HERPUD1 to the HRD1 complex.

It is found in the endoplasmic reticulum membrane. Its function is as follows. Component of the endoplasmic reticulum quality control (ERQC) system also called ER-associated degradation (ERAD) involved in ubiquitin-dependent degradation of misfolded endoplasmic reticulum proteins. Binds to ubiquilins and this interaction is required for efficient degradation of CD3D via the ERAD pathway. This Mus musculus (Mouse) protein is Homocysteine-responsive endoplasmic reticulum-resident ubiquitin-like domain member 1 protein (Herpud1).